A 206-amino-acid chain; its full sequence is Thymidylate kinase (206 aa).

Residue 10 to 17 (GIDGAGKS) participates in ATP binding.

It belongs to the thymidylate kinase family.

The enzyme catalyses dTMP + ATP = dTDP + ADP. Functionally, phosphorylation of dTMP to form dTDP in both de novo and salvage pathways of dTTP synthesis. In Neisseria meningitidis serogroup C / serotype 2a (strain ATCC 700532 / DSM 15464 / FAM18), this protein is Thymidylate kinase.